A 346-amino-acid chain; its full sequence is E3 ubiquitin-protein ligase ARK2C (346 aa).

2 disordered regions span residues 23 to 76 and 267 to 288; these read PFQR…QHSG and PHKYKKRRPQDGKGKKDEGEES. Residues 266-268 form a ubiquitin binding region; that stretch reads FPH. A compositionally biased stretch (basic and acidic residues) spans 275–284; that stretch reads PQDGKGKKDE. 2 residues coordinate Zn(2+): Cys294 and Cys297. The segment at 294–335 adopts an RING-type; atypical zinc-finger fold; it reads CTICLSMLEDGEDVRRLPCMHLFHQLCVDQWLAMSKKCPICR. The segment at 309–313 is ubiquitin binding; it reads RLPCM. His317 and Cys320 together coordinate Zn(2+).

The protein belongs to the Arkadia family. In terms of assembly, monomer; binding to the ubiquitin-conjugating enzyme E2 does not trigger homodimerization.

The protein localises to the nucleus. It carries out the reaction S-ubiquitinyl-[E2 ubiquitin-conjugating enzyme]-L-cysteine + [acceptor protein]-L-lysine = [E2 ubiquitin-conjugating enzyme]-L-cysteine + N(6)-ubiquitinyl-[acceptor protein]-L-lysine.. With respect to regulation, binds free ubiquitin non-covalently via its RING-type zinc finger. Ubiquitin-binding leads to enhance the E3 ubiquitin-protein ligase activity by stabilizing the ubiquitin-conjugating enzyme E2 (donor ubiquitin) in the 'closed' conformation and activating ubiquitin transfer. Its function is as follows. E3 ubiquitin-protein ligase that acts as a regulator of motor axon elongation. Required for efficient motor axon extension in the dorsal forelimb by enhancing the transcriptional responses of the SMAD1/SMAD5/SMAD8 effectors, which are activated downstream of BMP. Acts by mediating ubiquitination and degradation of SMAD inhibitors such as SMAD6, SMAD7, SKI and SNON isoform of SKIL. This chain is E3 ubiquitin-protein ligase ARK2C, found in Homo sapiens (Human).